The following is an 863-amino-acid chain: DNA ligase (863 aa).

Residues 76 to 80 (DAAYD), 125 to 126 (SL), and glutamate 159 each bind NAD(+). Lysine 161 serves as the catalytic N6-AMP-lysine intermediate. NAD(+)-binding residues include arginine 182 and glutamate 221. Residues 237 to 256 (EDAGRPPFANPRNAAAGSLR) form a disordered region. Residues 241-253 (RPPFANPRNAAAG) show a composition bias toward low complexity. Lysine 346 and lysine 370 together coordinate NAD(+). Zn(2+)-binding residues include cysteine 467, cysteine 470, cysteine 486, and cysteine 492. The BRCT domain occupies 781 to 863 (GLPQTLEGKS…DTLLATGDVQ (83 aa)).

This sequence belongs to the NAD-dependent DNA ligase family. LigA subfamily. Requires Mg(2+) as cofactor. It depends on Mn(2+) as a cofactor.

It catalyses the reaction NAD(+) + (deoxyribonucleotide)n-3'-hydroxyl + 5'-phospho-(deoxyribonucleotide)m = (deoxyribonucleotide)n+m + AMP + beta-nicotinamide D-nucleotide.. Its function is as follows. DNA ligase that catalyzes the formation of phosphodiester linkages between 5'-phosphoryl and 3'-hydroxyl groups in double-stranded DNA using NAD as a coenzyme and as the energy source for the reaction. It is essential for DNA replication and repair of damaged DNA. The sequence is that of DNA ligase from Bifidobacterium animalis subsp. lactis (strain AD011).